Reading from the N-terminus, the 210-residue chain is Na(+)-translocating NADH-quinone reductase subunit D (210 aa).

The next 5 membrane-spanning stretches (helical) occupy residues 42–62 (FVMTLAVTFVTALSNFFVSVI), 72–92 (IIVQMAIIASLVIVVDQILKA), 103–123 (VFVGLIITNCIVMGRAEAFAM), 131–151 (LIDGIGNGLGYGFVLITVGFF), and 178–198 (NGLMLLAPSAFFLIGFMIWAI).

The protein belongs to the NqrDE/RnfAE family. In terms of assembly, composed of six subunits; NqrA, NqrB, NqrC, NqrD, NqrE and NqrF.

It is found in the cell inner membrane. It catalyses the reaction a ubiquinone + n Na(+)(in) + NADH + H(+) = a ubiquinol + n Na(+)(out) + NAD(+). In terms of biological role, NQR complex catalyzes the reduction of ubiquinone-1 to ubiquinol by two successive reactions, coupled with the transport of Na(+) ions from the cytoplasm to the periplasm. NqrA to NqrE are probably involved in the second step, the conversion of ubisemiquinone to ubiquinol. The polypeptide is Na(+)-translocating NADH-quinone reductase subunit D (Vibrio vulnificus (strain YJ016)).